Here is a 495-residue protein sequence, read N- to C-terminus: N-succinylglutamate 5-semialdehyde dehydrogenase (495 aa).

Gly-228–Gly-233 contacts NAD(+). Active-site residues include Glu-251 and Cys-285.

It belongs to the aldehyde dehydrogenase family. AstD subfamily.

It carries out the reaction N-succinyl-L-glutamate 5-semialdehyde + NAD(+) + H2O = N-succinyl-L-glutamate + NADH + 2 H(+). It functions in the pathway amino-acid degradation; L-arginine degradation via AST pathway; L-glutamate and succinate from L-arginine: step 4/5. Functionally, catalyzes the NAD-dependent reduction of succinylglutamate semialdehyde into succinylglutamate. The sequence is that of N-succinylglutamate 5-semialdehyde dehydrogenase from Legionella pneumophila (strain Paris).